The sequence spans 315 residues: Homoserine kinase (315 aa).

Proline 97 to threonine 107 contributes to the ATP binding site.

The protein belongs to the GHMP kinase family. Homoserine kinase subfamily.

Its subcellular location is the cytoplasm. It catalyses the reaction L-homoserine + ATP = O-phospho-L-homoserine + ADP + H(+). The protein operates within amino-acid biosynthesis; L-threonine biosynthesis; L-threonine from L-aspartate: step 4/5. Catalyzes the ATP-dependent phosphorylation of L-homoserine to L-homoserine phosphate. This Parasynechococcus marenigrum (strain WH8102) protein is Homoserine kinase.